Reading from the N-terminus, the 330-residue chain is Adenylate isopentenyltransferase 5, chloroplastic (330 aa).

The N-terminal 39 residues, 1–39 (MKPCMTALRQVIQPLSLNFQGNMVDVPFFRRKDKVVFVM), are a transit peptide targeting the chloroplast. 40-47 (GATGTGKS) lines the ATP pocket.

This sequence belongs to the IPP transferase family. Expressed in root primordia, columella root caps, upper part of young inflorescences, and fruit abscission zones.

It is found in the plastid. The protein resides in the chloroplast. The enzyme catalyses dimethylallyl diphosphate + ADP = N(6)-(dimethylallyl)adenosine 5'-diphosphate + diphosphate. It carries out the reaction dimethylallyl diphosphate + ATP = N(6)-(dimethylallyl)adenosine 5'-triphosphate + diphosphate. In terms of biological role, involved in cytokinin biosynthesis. Catalyzes the transfer of an isopentenyl group from dimethylallyl diphosphate (DMAPP) to ATP and ADP. This Arabidopsis thaliana (Mouse-ear cress) protein is Adenylate isopentenyltransferase 5, chloroplastic (IPT5).